A 442-amino-acid polypeptide reads, in one-letter code: GTPase Der (442 aa).

2 consecutive EngA-type G domains span residues 2–167 and 175–351; these read RTIA…PIQN and FKFC…EQAM. GTP is bound by residues 8 to 15, 55 to 59, 119 to 122, 181 to 188, 228 to 232, and 293 to 296; these read GKPNVGKS, DTGGI, NKIE, GRPNVGKS, DTAGI, and NKWD. The KH-like domain maps to 352–436; it reads RKIATSLLND…PITLYWQDKN (85 aa).

The protein belongs to the TRAFAC class TrmE-Era-EngA-EngB-Septin-like GTPase superfamily. EngA (Der) GTPase family. In terms of assembly, associates with the 50S ribosomal subunit.

Its function is as follows. GTPase that plays an essential role in the late steps of ribosome biogenesis. The polypeptide is GTPase Der (Ureaplasma parvum serovar 3 (strain ATCC 27815 / 27 / NCTC 11736)).